Consider the following 513-residue polypeptide: MTLTLTPGAATLAQLQDIWANNRAVTLCPSAHAGIKAAQALVAKAAAGDDAVYGVNTGFGKLASVKIAAKDVATLQRNLILSHCCGVGEPLDAATTRLMMVLKLLSLGRGASGVAMTTLEIIENMLARGVTPVIPSQGSVGASGDLAPLAHMAAAMIGEGEAVFEGTRMAAGDALRRAGITPIVLGAKEGLALINGTQFSTACALVGLWGAWRNAATCVLTCALSTDAIMGSTAPLQDAIHTLRGHAGQIAVARAQRALMAGSQIRESHVEGDTRVQDPYCIRCQPQVTGAAMDILHFAGRTLEIEANAVTDNPLVLVEDELIVSGGNFHAEPVGFAADQIAVAVSELGAIAQRRVALMVDPTLSFDLPPFLTPDPGLNSGLMIAEVTTAALMSENKHLANPCTTDSTPTSANQEDHVSMAAHAARRLLRMNANLNVILGVEAMCGAQGIEFRAPLETSAPLKAAMAVLRAHVPTIAEDRYMAPSIEAASALVANGTLAACVDLPAFVKGEAA.

The segment at residues 142-144 (ASG) is a cross-link (5-imidazolinone (Ala-Gly)). A 2,3-didehydroalanine (Ser) modification is found at serine 143.

It belongs to the PAL/histidase family. In terms of processing, contains an active site 4-methylidene-imidazol-5-one (MIO), which is formed autocatalytically by cyclization and dehydration of residues Ala-Ser-Gly.

It localises to the cytoplasm. The enzyme catalyses L-histidine = trans-urocanate + NH4(+). It participates in amino-acid degradation; L-histidine degradation into L-glutamate; N-formimidoyl-L-glutamate from L-histidine: step 1/3. This is Histidine ammonia-lyase from Roseobacter denitrificans (strain ATCC 33942 / OCh 114) (Erythrobacter sp. (strain OCh 114)).